The chain runs to 371 residues: Queuine tRNA-ribosyltransferase (371 aa).

Residue Asp-90 is the Proton acceptor of the active site. Substrate contacts are provided by residues 90-94, Asp-144, Gln-188, and Gly-215; that span reads DSGGF. Positions 246–252 are RNA binding; sequence GVGTPED. Asp-265 serves as the catalytic Nucleophile. Residues 270–274 are RNA binding; important for wobble base 34 recognition; the sequence is TRNAR. Residues Cys-303, Cys-305, Cys-308, and His-334 each coordinate Zn(2+).

The protein belongs to the queuine tRNA-ribosyltransferase family. Homodimer. Within each dimer, one monomer is responsible for RNA recognition and catalysis, while the other monomer binds to the replacement base PreQ1. The cofactor is Zn(2+).

The enzyme catalyses 7-aminomethyl-7-carbaguanine + guanosine(34) in tRNA = 7-aminomethyl-7-carbaguanosine(34) in tRNA + guanine. It participates in tRNA modification; tRNA-queuosine biosynthesis. Its function is as follows. Catalyzes the base-exchange of a guanine (G) residue with the queuine precursor 7-aminomethyl-7-deazaguanine (PreQ1) at position 34 (anticodon wobble position) in tRNAs with GU(N) anticodons (tRNA-Asp, -Asn, -His and -Tyr). Catalysis occurs through a double-displacement mechanism. The nucleophile active site attacks the C1' of nucleotide 34 to detach the guanine base from the RNA, forming a covalent enzyme-RNA intermediate. The proton acceptor active site deprotonates the incoming PreQ1, allowing a nucleophilic attack on the C1' of the ribose to form the product. After dissociation, two additional enzymatic reactions on the tRNA convert PreQ1 to queuine (Q), resulting in the hypermodified nucleoside queuosine (7-(((4,5-cis-dihydroxy-2-cyclopenten-1-yl)amino)methyl)-7-deazaguanosine). The sequence is that of Queuine tRNA-ribosyltransferase from Neisseria meningitidis serogroup B (strain ATCC BAA-335 / MC58).